A 218-amino-acid polypeptide reads, in one-letter code: Adenylate kinase (218 aa).

10–15 lines the ATP pocket; sequence GAGKGT. Residues 30–59 are NMP; it reads STGDMLRAAVKAGSPLGLKVKEVMATGGLV. Residues T31, R36, 57–59, 85–88, and Q92 each bind AMP; these read GLV and GFPR. An LID region spans residues 122-159; sequence GRRVHEASGRVYHVDYNPPKVEGKDDVTGEPLVQREDD. Residues R123 and 132-133 contribute to the ATP site; that span reads VY. 2 residues coordinate AMP: R156 and R167. Residue G203 coordinates ATP.

Belongs to the adenylate kinase family. Monomer.

The protein localises to the cytoplasm. It catalyses the reaction AMP + ATP = 2 ADP. The protein operates within purine metabolism; AMP biosynthesis via salvage pathway; AMP from ADP: step 1/1. Its function is as follows. Catalyzes the reversible transfer of the terminal phosphate group between ATP and AMP. Plays an important role in cellular energy homeostasis and in adenine nucleotide metabolism. This Hahella chejuensis (strain KCTC 2396) protein is Adenylate kinase.